A 607-amino-acid chain; its full sequence is UvrABC system protein C (607 aa).

Residues 16–94 enclose the GIY-YIG domain; sequence GRPGVYRMFD…IKEWRPPYNI (79 aa). Residues 203-238 enclose the UVR domain; that stretch reads QQLGNELNAEMEKAAMALDFEKAAELRDQIALLRRV.

It belongs to the UvrC family. Interacts with UvrB in an incision complex.

The protein resides in the cytoplasm. Its function is as follows. The UvrABC repair system catalyzes the recognition and processing of DNA lesions. UvrC both incises the 5' and 3' sides of the lesion. The N-terminal half is responsible for the 3' incision and the C-terminal half is responsible for the 5' incision. This is UvrABC system protein C from Pseudomonas putida (strain ATCC 47054 / DSM 6125 / CFBP 8728 / NCIMB 11950 / KT2440).